Here is a 554-residue protein sequence, read N- to C-terminus: Undecaprenyl phosphate-alpha-4-amino-4-deoxy-L-arabinose arabinosyl transferase (554 aa).

11 helical membrane passes run 4 to 24 (LKGSGAALLALFFALVYLLPI), 87 to 107 (FGSIFSTALSAVFVYWLATLL), 115 to 135 (FLAALIYLSMLLVFSIGSYAV), 178 to 198 (FMTKGFLALAVPVISVLPIVI), 206 to 226 (LIIFGPIAIVGAVILSLPWAL), 262 to 282 (YLPILCLGVLPWLGLLPAALL), 293 to 313 (ELFFLLSWVLMPLIFFSVAKG), 315 to 335 (LPTYILPCMAPLSLLMAAYAT), 352 to 372 (INLIFGFICALAILVIGMGWV), 384 to 404 (QKVILATIAFAGWGIVGFATM), and 410 to 430 (HWHWAAACPLLFILLVGYLIP).

Belongs to the glycosyltransferase 83 family.

The protein resides in the cell inner membrane. The catalysed reaction is 4-amino-4-deoxy-alpha-L-arabinopyranosyl di-trans,octa-cis-undecaprenyl phosphate + lipid IVA = lipid IIA + di-trans,octa-cis-undecaprenyl phosphate.. Its pathway is lipopolysaccharide metabolism; 4-amino-4-deoxy-beta-L-arabinose-lipid A biosynthesis. Its function is as follows. Catalyzes the transfer of the L-Ara4N moiety of the glycolipid undecaprenyl phosphate-alpha-L-Ara4N to lipid A. The modified arabinose is attached to lipid A and is required for resistance to polymyxin and cationic antimicrobial peptides. The sequence is that of Undecaprenyl phosphate-alpha-4-amino-4-deoxy-L-arabinose arabinosyl transferase from Yersinia enterocolitica serotype O:8 / biotype 1B (strain NCTC 13174 / 8081).